The chain runs to 314 residues: Malate dehydrogenase (314 aa).

NAD(+)-binding positions include 13–18 (GGGQIG) and D37. Positions 88 and 94 each coordinate substrate. NAD(+) is bound by residues N101 and 124–126 (VAN). Residues N126 and R157 each contribute to the substrate site. H181 functions as the Proton acceptor in the catalytic mechanism.

Belongs to the LDH/MDH superfamily. MDH type 3 family.

The enzyme catalyses (S)-malate + NAD(+) = oxaloacetate + NADH + H(+). Functionally, catalyzes the reversible oxidation of malate to oxaloacetate. This is Malate dehydrogenase from Myxococcus xanthus.